The primary structure comprises 331 residues: Probable serine hydrolase (331 aa).

The segment at 1 to 28 is disordered; sequence MGQTRVAATTAAQSPAAELSPETNGQTE. Residues 7–17 are compositionally biased toward low complexity; the sequence is AATTAAQSPAA. The AB hydrolase-1 domain maps to 63 to 163; the sequence is PIIALHGWQD…EVEKLINIDI (101 aa). Residue serine 138 is part of the active site.

The protein belongs to the AB hydrolase superfamily. In terms of tissue distribution, ubiquitously expressed before embryonic stage 11. At stage 11, expression is concentrated in the foregut and posterior midgut. By stage 15, in gastric caeca, pharynx, posterior spiracles and anterior edge of midgut. At the end of embryogenesis, expression is confined to gastric caeca. During third instar larvae, expressed at low levels in gastric caeca, midgut and hindgut and high level in fat body.

Its function is as follows. May have a role in detoxification and digestion during embryogenesis and larval development. This Drosophila melanogaster (Fruit fly) protein is Probable serine hydrolase (kraken).